Here is a 258-residue protein sequence, read N- to C-terminus: Histidine/lysine/arginine/ornithine transport ATP-binding protein HisP (258 aa).

Residues 7-253 form the ABC transporter domain; it reads LHVIDLHKRY…PQSPRLQQFL (247 aa). The ATP site is built by S41, G42, G44, K45, S46, and T47.

Belongs to the ABC transporter superfamily. The HisPMQJ complex is composed of two ATP-binding proteins (HisP), two transmembrane proteins (HisM and HisQ) and a solute-binding protein (HisJ). The HisPMQ-ArgT complex is composed of two ATP-binding proteins (HisP), two transmembrane proteins (HisM and HisQ) and a solute-binding protein (ArgT).

It is found in the cell inner membrane. The enzyme catalyses a polar amino acid(out) + ATP + H2O = a polar amino acid(in) + ADP + phosphate + H(+). It catalyses the reaction L-histidine(out) + ATP + H2O = L-histidine(in) + ADP + phosphate + H(+). It carries out the reaction L-lysine(out) + ATP + H2O = L-lysine(in) + ADP + phosphate + H(+). The catalysed reaction is L-arginine(out) + ATP + H2O = L-arginine(in) + ADP + phosphate + H(+). The enzyme catalyses L-ornithine(out) + ATP + H2O = L-ornithine(in) + ADP + phosphate + H(+). Its activity is regulated as follows. Isolated, soluble HisP has a very low ATPase activity. ATPase activity is slightly increased in the presence of HisM and HisQ, and strongly increased when HisJ is also present. Functionally, part of the ABC transporter complex HisPMQJ involved in histidine transport. Is also part of the ABC transporter complex HisPMQ-ArgT involved in lysine/arginine/ornithine transport. Shows ATPase activity. Responsible for energy coupling to the transport system. This chain is Histidine/lysine/arginine/ornithine transport ATP-binding protein HisP, found in Salmonella typhimurium (strain LT2 / SGSC1412 / ATCC 700720).